A 554-amino-acid chain; its full sequence is Carboxypeptidase Y homolog A (554 aa).

Residues 1–17 (MRISASTVLLGAASAAS) form the signal peptide. Positions 18–137 (AASFQNQAQQ…QLDNFNLRVK (120 aa)) are excised as a propeptide. Intrachain disulfides connect C191/C431, C325/C339, C349/C372, C356/C365, and C394/C401. N-linked (GlcNAc...) asparagine glycosylation occurs at N222. S278 is an active-site residue. The active site involves D470. N-linked (GlcNAc...) asparagine glycosylation is present at N518. H529 is a catalytic residue.

The protein belongs to the peptidase S10 family.

The protein localises to the vacuole. The enzyme catalyses Release of a C-terminal amino acid with broad specificity.. In terms of biological role, vacuolar carboxypeptidase involved in degradation of small peptides. Digests preferentially peptides containing an aliphatic or hydrophobic residue in P1' position, as well as methionine, leucine or phenylalanine in P1 position of ester substrate. The sequence is that of Carboxypeptidase Y homolog A (CPYA) from Sordaria macrospora (strain ATCC MYA-333 / DSM 997 / K(L3346) / K-hell).